The primary structure comprises 82 residues: MVLAVDLLNPSPASEARKHKLKTLVPAPRSFFMDVKCPGCFTITTVFSHAQTVVICQGCTTVLCQPTGGKARLTEGCSFRRK.

The C4-type zinc finger occupies Cys37–Cys59.

This sequence belongs to the eukaryotic ribosomal protein eS27 family. In terms of assembly, component of the small ribosomal subunit (SSU). Mature N.crassa ribosomes consist of a small (40S) and a large (60S) subunit. The 40S small subunit contains 1 molecule of ribosomal RNA (18S rRNA) and at least 32 different proteins. The large 60S subunit contains 3 rRNA molecules (26S, 5.8S and 5S rRNA) and at least 42 different proteins. It depends on Zn(2+) as a cofactor.

The protein localises to the cytoplasm. Component of the ribosome, a large ribonucleoprotein complex responsible for the synthesis of proteins in the cell. The small ribosomal subunit (SSU) binds messenger RNAs (mRNAs) and translates the encoded message by selecting cognate aminoacyl-transfer RNA (tRNA) molecules. The large subunit (LSU) contains the ribosomal catalytic site termed the peptidyl transferase center (PTC), which catalyzes the formation of peptide bonds, thereby polymerizing the amino acids delivered by tRNAs into a polypeptide chain. The nascent polypeptides leave the ribosome through a tunnel in the LSU and interact with protein factors that function in enzymatic processing, targeting, and the membrane insertion of nascent chains at the exit of the ribosomal tunnel. The protein is Small ribosomal subunit protein eS27 (crp-6) of Neurospora crassa (strain ATCC 24698 / 74-OR23-1A / CBS 708.71 / DSM 1257 / FGSC 987).